We begin with the raw amino-acid sequence, 224 residues long: Giant hemoglobin linker AV-1 chain (224 aa).

The 42-residue stretch at 62 to 103 (HWCPSKYHRCGNSPQCMSNMAFCDGVNDCKNHFDEDENRCVV) folds into the LDL-receptor class A domain. 3 cysteine pairs are disulfide-bonded: Cys-64/Cys-77, Cys-71/Cys-90, and Cys-84/Cys-101. An N-linked (GlcNAc...) asparagine glycan is attached at Asn-108.

Giant hemoglobin is composed of four heme-containing chains (AI to AIV), and two linker chains (AV and AVI).

In terms of biological role, acts as a linker for the assembly of heme-containing chains in the construction of giant hemoglobin. The polypeptide is Giant hemoglobin linker AV-1 chain (Lamellibrachia sp. (Deep-sea giant tube worm)).